A 298-amino-acid chain; its full sequence is Thymidylate synthase (298 aa).

Residues arginine 25 and 159-160 contribute to the dUMP site; that span reads RR. Cysteine 179 (nucleophile) is an active-site residue. Residues 200-203, asparagine 211, and 241-243 contribute to the dUMP site; these read RSVD and HLY. Aspartate 203 lines the (6R)-5,10-methylene-5,6,7,8-tetrahydrofolate pocket. Alanine 297 provides a ligand contact to (6R)-5,10-methylene-5,6,7,8-tetrahydrofolate.

It belongs to the thymidylate synthase family. Bacterial-type ThyA subfamily. In terms of assembly, homodimer.

It localises to the cytoplasm. The enzyme catalyses dUMP + (6R)-5,10-methylene-5,6,7,8-tetrahydrofolate = 7,8-dihydrofolate + dTMP. Its pathway is pyrimidine metabolism; dTTP biosynthesis. In terms of biological role, catalyzes the reductive methylation of 2'-deoxyuridine-5'-monophosphate (dUMP) to 2'-deoxythymidine-5'-monophosphate (dTMP) while utilizing 5,10-methylenetetrahydrofolate (mTHF) as the methyl donor and reductant in the reaction, yielding dihydrofolate (DHF) as a by-product. This enzymatic reaction provides an intracellular de novo source of dTMP, an essential precursor for DNA biosynthesis. The chain is Thymidylate synthase from Cereibacter sphaeroides (strain ATCC 17029 / ATH 2.4.9) (Rhodobacter sphaeroides).